The sequence spans 274 residues: NH(3)-dependent NAD(+) synthetase (274 aa).

46 to 53 (GISGGQDS) contacts ATP. Asp52 contributes to the Mg(2+) binding site. Residue Arg140 coordinates deamido-NAD(+). Thr160 contributes to the ATP binding site. A Mg(2+)-binding site is contributed by Glu165. Positions 173 and 180 each coordinate deamido-NAD(+). Positions 189 and 211 each coordinate ATP. 260-261 (HK) is a deamido-NAD(+) binding site.

It belongs to the NAD synthetase family. As to quaternary structure, homodimer.

It catalyses the reaction deamido-NAD(+) + NH4(+) + ATP = AMP + diphosphate + NAD(+) + H(+). The protein operates within cofactor biosynthesis; NAD(+) biosynthesis; NAD(+) from deamido-NAD(+) (ammonia route): step 1/1. Its function is as follows. Catalyzes the ATP-dependent amidation of deamido-NAD to form NAD. Uses ammonia as a nitrogen source. In Sodalis glossinidius (strain morsitans), this protein is NH(3)-dependent NAD(+) synthetase.